The following is a 198-amino-acid chain: Nucleoid occlusion factor SlmA (198 aa).

The HTH tetR-type domain occupies 10–70 (NRREEILQSL…SLIEFIEDSL (61 aa)). Positions 33–52 (TTAKLAASVGVSEAALYRHF) form a DNA-binding region, H-T-H motif. Positions 117 to 144 (EQDRLQGRINQLFERIEAQLRQVLREKR) form a coiled coil.

It belongs to the nucleoid occlusion factor SlmA family. In terms of assembly, homodimer. Interacts with FtsZ.

The protein resides in the cytoplasm. It is found in the nucleoid. Its function is as follows. Required for nucleoid occlusion (NO) phenomenon, which prevents Z-ring formation and cell division over the nucleoid. Acts as a DNA-associated cell division inhibitor that binds simultaneously chromosomal DNA and FtsZ, and disrupts the assembly of FtsZ polymers. SlmA-DNA-binding sequences (SBS) are dispersed on non-Ter regions of the chromosome, preventing FtsZ polymerization at these regions. The polypeptide is Nucleoid occlusion factor SlmA (Salmonella dublin (strain CT_02021853)).